A 126-amino-acid chain; its full sequence is Adenosine 5'-monophosphoramidase HINT1 (126 aa).

At Ala-2 the chain carries N-acetylalanine. An HIT domain is found at 18–126 (IFGKIIRKEI…GGRQMHWPPG (109 aa)). Residues Lys-21 and Lys-30 each carry the N6-acetyllysine modification. AMP is bound at residue 43–44 (DI). Phosphoserine is present on residues Ser-45 and Ser-72. Residues Asn-99, 105 to 107 (GQS), and 112 to 114 (HLH) each bind AMP. Positions 110-114 (HVHLH) match the Histidine triad motif motif. His-112 acts as the Tele-AMP-histidine intermediate in catalysis.

This sequence belongs to the HINT family. In terms of assembly, homodimer. Interacts with CDK7. Interacts with RUVBL1 and RUVBL2 and is associated with the LEF1/TCF1-CTNNB1 complex and with a KAT5 histone acetyltransferase complex. Identified in a complex with MITF and CTNNB1. Interacts with CDC34 and RBX1, and is part of a SCF (SKP2-CUL1-F-box protein) E3 ubiquitin-protein ligase complex. Interacts with SUMO1, SUMO2 and RGS17. Interacts with the Ten-1 ICD form of TENM1. Interacts with CALM1; interaction increases in the presence of calcium ions.

The protein resides in the cytoplasm. It localises to the nucleus. It catalyses the reaction adenosine 5'-phosphoramidate + H2O = AMP + NH4(+). Exhibits adenosine 5'-monophosphoramidase activity, hydrolyzing purine nucleotide phosphoramidates with a single phosphate group such as adenosine 5'monophosphoramidate (AMP-NH2) to yield AMP and NH2. Hydrolyzes adenosine 5'monophosphomorpholidate (AMP-morpholidate) and guanosine 5'monophosphomorpholidate (GMP-morpholidate). Hydrolyzes lysyl-AMP (AMP-N-epsilon-(N-alpha-acetyl lysine methyl ester)) generated by lysine tRNA ligase, as well as Met-AMP, His-AMP and Asp-AMP, lysyl-GMP (GMP-N-epsilon-(N-alpha-acetyl lysine methyl ester)) and AMP-N-alanine methyl ester. Can also convert adenosine 5'-O-phosphorothioate and guanosine 5'-O-phosphorothioate to the corresponding nucleoside 5'-O-phosphates with concomitant release of hydrogen sulfide. In addition, functions as a scaffolding protein that modulates transcriptional activation by the LEF1/TCF1-CTNNB1 complex and by the complex formed with MITF and CTNNB1. Modulates p53/TP53 levels and p53/TP53-mediated apoptosis. Modulates proteasomal degradation of target proteins by the SCF (SKP2-CUL1-F-box protein) E3 ubiquitin-protein ligase complex. Also exhibits SUMO-specific isopeptidase activity, deconjugating SUMO1 from RANGAP1 and RGS17. This chain is Adenosine 5'-monophosphoramidase HINT1 (HINT1), found in Pongo abelii (Sumatran orangutan).